Here is a 266-residue protein sequence, read N- to C-terminus: Ribonuclease 3 (266 aa).

In terms of domain architecture, RNase III spans 8-130 (LARLTKKLGY…IIGAVYLDSN (123 aa)). Residue E43 participates in Mg(2+) binding. The active site involves D47. 2 residues coordinate Mg(2+): D116 and E119. The active site involves E119. The DRBM domain maps to 157-227 (DPKTRLQEFL…AQQILALIEK (71 aa)). The tract at residues 229 to 266 (REQEKEVKIKPTKQAKLANPRHTKSNPSSSSKKSSTRK) is disordered. The span at 253 to 266 (SNPSSSSKKSSTRK) shows a compositional bias: low complexity.

It belongs to the ribonuclease III family. In terms of assembly, homodimer. The cofactor is Mg(2+).

It is found in the cytoplasm. The enzyme catalyses Endonucleolytic cleavage to 5'-phosphomonoester.. In terms of biological role, digests double-stranded RNA. Involved in the processing of primary rRNA transcript to yield the immediate precursors to the large and small rRNAs (23S and 16S). Processes some mRNAs, and tRNAs when they are encoded in the rRNA operon. Processes pre-crRNA and tracrRNA of type II CRISPR loci if present in the organism. The polypeptide is Ribonuclease 3 (Colwellia psychrerythraea (strain 34H / ATCC BAA-681) (Vibrio psychroerythus)).